Consider the following 272-residue polypeptide: TIP41-like protein (272 aa).

Lysine 106 carries the post-translational modification N6-acetyllysine. Residues 173 to 272 (RVMPSSFFLL…ADSQKSTQVE (100 aa)) form an interaction with PPP2CA region. Residue serine 265 is modified to Phosphoserine.

The protein belongs to the TIP41 family. In terms of assembly, isoform 1 interacts with PPP2CA. Isoform 2 does not interact with PPP2CA. Interacts with PPP2CB, PPP4C and PPP6C. Interacts with IGBP1; the interaction is dependent on PPP2CA. Associates with a protein phosphatase 2A PP2A(C):IGBP1 complex. Interacts with PPP4C and PPP4R2.

The protein resides in the cytoplasm. May be a allosteric regulator of serine/threonine-protein phosphatase 2A (PP2A). Isoform 1 inhibits catalytic activity of the PP2A(D) core complex in vitro. The PP2A(C):TIPRL complex does not show phosphatase activity. Acts as a negative regulator of serine/threonine-protein phosphatase 4 probably by inhibiting the formation of the active PPP4C:PPP4R2 complex; the function is proposed to implicate it in DNA damage response by promoting H2AX phosphorylated on Ser-140 (gamma-H2AX). May play a role in the regulation of ATM/ATR signaling pathway controlling DNA replication and repair. The polypeptide is TIP41-like protein (TIPRL) (Homo sapiens (Human)).